Reading from the N-terminus, the 349-residue chain is Protein-glutamate methylesterase/protein-glutamine glutaminase (349 aa).

Residues 5 to 122 form the Response regulatory domain; it reads RVLSVDDSAL…REGMLAYSEM (118 aa). At aspartate 56 the chain carries 4-aspartylphosphate. The CheB-type methylesterase domain maps to 152 to 344; that stretch reads LLSSEKLIAI…QQMLAKISAG (193 aa). Catalysis depends on residues serine 164, histidine 190, and aspartate 286.

It belongs to the CheB family. In terms of processing, phosphorylated by CheA. Phosphorylation of the N-terminal regulatory domain activates the methylesterase activity.

The protein resides in the cytoplasm. The catalysed reaction is [protein]-L-glutamate 5-O-methyl ester + H2O = L-glutamyl-[protein] + methanol + H(+). It carries out the reaction L-glutaminyl-[protein] + H2O = L-glutamyl-[protein] + NH4(+). Functionally, involved in chemotaxis. Part of a chemotaxis signal transduction system that modulates chemotaxis in response to various stimuli. Catalyzes the demethylation of specific methylglutamate residues introduced into the chemoreceptors (methyl-accepting chemotaxis proteins or MCP) by CheR. Also mediates the irreversible deamidation of specific glutamine residues to glutamic acid. The polypeptide is Protein-glutamate methylesterase/protein-glutamine glutaminase (Salmonella choleraesuis (strain SC-B67)).